We begin with the raw amino-acid sequence, 664 residues long: MSTKAVVFAYHDIGCVGLQALLDAGYEIAAVFTHADDPREKTFFGSVAQLCARHGIAVHAPEDPNHPLWVERIGKLAPDFIFSFYYRQLLGDSLLACAKKAALNLHGSLLPRYRGRAPANWVLVNGESETGVTLHQMVKRADAGPIVAQQRVSISATDTALTLHGKLRDAAADLLCETLPLLAAQGQLPATPQDESRATYFGRRTPADGLIDWSLPATQLYNLIRAVTQPYPGAFCPVGDNKLIVWAASVDTSSNGEAPGTVISHEPLRIACGEGSLVITAGQRGDNGLYLSGEQLAREFGLVAGSQMLDKAKRRSVRRTRVLILGVNGFIGNHLSERLLQDDRYEIYGMDIGSDAIERLRAKPNFHFIEGDISIHTEWIEYHIKKCDVVLPLVAIATPIEYTRNPLRVFELDFEENLKIVRYCVKYNKRVIFPSTSEVYGMCQDANFNEDTSNLIVGPINKQRWIYSVSKQLLDRVIWAYGQKGLQFTLFRPFNWMGPRLDRLDSARIGSSRAITQLILHLVEGTPIRLVDGGAQKRCFTDVVDGIEALARIIENRDGRCNGQIINIGNPDNEASIRQLGEELLRQFEAHPLRGHFPPFAGFREVESQSFYGKGYQDVSHRTPSIDNAKKLIGWTPGIELSETIGKTLDFFLREAMAEKADQC.

Residues 1–308 (MSTKAVVFAY…EFGLVAGSQM (308 aa)) form a formyltransferase ArnAFT region. The active-site Proton donor; for formyltransferase activity is His106. (6R)-10-formyltetrahydrofolate is bound by residues Arg116 and 138-142 (VKRAD). The segment at 318 to 664 (RRTRVLILGV…EAMAEKADQC (347 aa)) is dehydrogenase ArnADH. NAD(+) contacts are provided by residues Asp351 and 372–373 (DI). Residues Ala397, Tyr402, and 436 to 437 (TS) each bind UDP-alpha-D-glucuronate. Residue Glu438 is the Proton acceptor; for decarboxylase activity of the active site. Residues Arg464, Asn495, 529-538 (RLVDGGAQKR), and Tyr616 each bind UDP-alpha-D-glucuronate. Arg622 serves as the catalytic Proton donor; for decarboxylase activity.

It in the N-terminal section; belongs to the Fmt family. UDP-L-Ara4N formyltransferase subfamily. This sequence in the C-terminal section; belongs to the NAD(P)-dependent epimerase/dehydratase family. UDP-glucuronic acid decarboxylase subfamily. As to quaternary structure, homohexamer, formed by a dimer of trimers.

It catalyses the reaction UDP-alpha-D-glucuronate + NAD(+) = UDP-beta-L-threo-pentopyranos-4-ulose + CO2 + NADH. It carries out the reaction UDP-4-amino-4-deoxy-beta-L-arabinose + (6R)-10-formyltetrahydrofolate = UDP-4-deoxy-4-formamido-beta-L-arabinose + (6S)-5,6,7,8-tetrahydrofolate + H(+). The protein operates within nucleotide-sugar biosynthesis; UDP-4-deoxy-4-formamido-beta-L-arabinose biosynthesis; UDP-4-deoxy-4-formamido-beta-L-arabinose from UDP-alpha-D-glucuronate: step 1/3. It functions in the pathway nucleotide-sugar biosynthesis; UDP-4-deoxy-4-formamido-beta-L-arabinose biosynthesis; UDP-4-deoxy-4-formamido-beta-L-arabinose from UDP-alpha-D-glucuronate: step 3/3. Its pathway is bacterial outer membrane biogenesis; lipopolysaccharide biosynthesis. Bifunctional enzyme that catalyzes the oxidative decarboxylation of UDP-glucuronic acid (UDP-GlcUA) to UDP-4-keto-arabinose (UDP-Ara4O) and the addition of a formyl group to UDP-4-amino-4-deoxy-L-arabinose (UDP-L-Ara4N) to form UDP-L-4-formamido-arabinose (UDP-L-Ara4FN). The modified arabinose is attached to lipid A and is required for resistance to polymyxin and cationic antimicrobial peptides. This Pseudomonas syringae pv. syringae (strain B728a) protein is Bifunctional polymyxin resistance protein ArnA.